Consider the following 248-residue polypeptide: Ribonuclease HII (248 aa).

Residues 29-219 enclose the RNase H type-2 domain; that stretch reads DIVCGVDEAG…VREAHLRLGT (191 aa). Positions 35, 36, and 128 each coordinate a divalent metal cation.

The protein belongs to the RNase HII family. Requires Mn(2+) as cofactor. Mg(2+) serves as cofactor.

The protein localises to the cytoplasm. It carries out the reaction Endonucleolytic cleavage to 5'-phosphomonoester.. Its function is as follows. Endonuclease that specifically degrades the RNA of RNA-DNA hybrids. The protein is Ribonuclease HII of Paraburkholderia xenovorans (strain LB400).